The following is a 210-amino-acid chain: Ribosomal RNA small subunit methyltransferase G (210 aa).

Residues G77, F82, 100–102 (ERS), 128–129 (VE), and R141 contribute to the S-adenosyl-L-methionine site.

Belongs to the methyltransferase superfamily. RNA methyltransferase RsmG family.

Its subcellular location is the cytoplasm. Functionally, specifically methylates the N7 position of a guanine in 16S rRNA. This is Ribosomal RNA small subunit methyltransferase G from Borrelia recurrentis (strain A1).